The sequence spans 89 residues: Probable oxaloacetate decarboxylase gamma chain (89 aa).

A helical membrane pass occupies residues 13 to 33; that stretch reads LMLSGMGFVITFLLILIWAIT.

Belongs to the OadG family. In terms of assembly, heterotrimer of an alpha, a beta and a gamma subunit. The cofactor is Na(+).

The protein localises to the cell membrane. The catalysed reaction is oxaloacetate + 2 Na(+)(in) + H(+) = pyruvate + 2 Na(+)(out) + CO2. Catalyzes the decarboxylation of oxaloacetate coupled to Na(+) translocation. This Actinobacillus succinogenes (strain ATCC 55618 / DSM 22257 / CCUG 43843 / 130Z) protein is Probable oxaloacetate decarboxylase gamma chain.